Here is a 146-residue protein sequence, read N- to C-terminus: Hemoglobin subunit beta (146 aa).

The 145-residue stretch at 2 to 146 folds into the Globin domain; that stretch reads HWSAEEKQLI…VAHALARKYH (145 aa). Positions 63 and 92 each coordinate heme b.

This sequence belongs to the globin family. In terms of assembly, heterotetramer of two alpha chains and two beta chains. Red blood cells.

Involved in oxygen transport from the lung to the various peripheral tissues. This chain is Hemoglobin subunit beta (HBB), found in Anseranas semipalmata (Magpie goose).